A 334-amino-acid chain; its full sequence is Formamidase (334 aa).

Positions 14–260 constitute a CN hydrolase domain; it reads FLVAAIQFPV…WEIVTGEIYP (247 aa). The active-site Proton acceptor is E60. K133 (proton donor) is an active-site residue. The Nucleophile role is filled by C166.

Belongs to the carbon-nitrogen hydrolase superfamily. Aliphatic amidase family.

The catalysed reaction is formamide + H2O = formate + NH4(+). Is an aliphatic amidase with a restricted substrate specificity, as it only hydrolyzes formamide. In Helicobacter pylori (strain J99 / ATCC 700824) (Campylobacter pylori J99), this protein is Formamidase.